Reading from the N-terminus, the 513-residue chain is Cytochrome P450 monooxygenase sthF (513 aa).

2 consecutive transmembrane segments (helical) span residues 13–33 (FPSLHRIIISTFALIAAYIFI) and 212–232 (MLHPWLQLVFANIYITHIILL). C452 contributes to the heme binding site.

Belongs to the cytochrome P450 family. Heme serves as cofactor.

The protein resides in the membrane. It carries out the reaction dehydroprobetaenone I + NADPH + O2 + H(+) = epoxybetaenone + NADP(+) + H2O. The enzyme catalyses dehydroprobetaenone I + 3 NADPH + 3 O2 + 3 H(+) = betaenone C + 3 NADP(+) + 3 H2O. It catalyses the reaction probetaenone I + 3 NADPH + 3 O2 + 3 H(+) = betaenone B + 3 NADP(+) + 3 H2O. Its pathway is mycotoxin biosynthesis. Its function is as follows. Cytochrome P450 monooxygenase; part of the gene cluster that mediates the biosynthesis of the phytotoxin stemphyloxin II. The first step of the pathway is the synthesis of dehydroprobetaenone I by the polyketide synthase sthA and the enoyl reductase sthE via condensation of one acetyl-CoA starter unit with 7 malonyl-CoA units and 5 methylations. The C-terminal reductase (R) domain of sthA catalyzes the reductive release of the polyketide chain. Because sthA lacks a designated enoylreductase (ER) domain, the required activity is provided the enoyl reductase sthE. The short-chain dehydrogenase/reductase sthC then catalyzes reduction of dehydroprobetaenone I to probetaenone I. The cytochrome P450 monooxygenase sthF catalyzes successive epoxidation, oxidation (resulting from epoxide opening) and hydroxylation to install a tertiary alcohol in the decaline ring to yield betaenone C from dehydroprobetaenone I and betaenone B from probetaenone I. The FAD-linked oxidoreductase sthB is responsible for the conversion of betaenone C to betaenone A via an intramolecular aldol reaction between C-1 and C-17 to form the bridged tricyclic system in betaenone A. Finally, the cytochrome P450 monooxygenase sthD catalyzes the hydroxylation of C-15 to afford the final metabolite stemphyloxin II. The chain is Cytochrome P450 monooxygenase sthF from Phaeosphaeria nodorum (strain SN15 / ATCC MYA-4574 / FGSC 10173) (Glume blotch fungus).